Reading from the N-terminus, the 179-residue chain is Probable chorismate pyruvate-lyase (179 aa).

Arg82, Leu120, and Glu165 together coordinate substrate.

This sequence belongs to the UbiC family.

Its subcellular location is the cytoplasm. The catalysed reaction is chorismate = 4-hydroxybenzoate + pyruvate. Its pathway is cofactor biosynthesis; ubiquinone biosynthesis. Its function is as follows. Removes the pyruvyl group from chorismate, with concomitant aromatization of the ring, to provide 4-hydroxybenzoate (4HB) for the ubiquinone pathway. This Vibrio cholerae serotype O1 (strain ATCC 39315 / El Tor Inaba N16961) protein is Probable chorismate pyruvate-lyase.